The sequence spans 308 residues: Taste receptor type 2 member 107 (308 aa).

The Extracellular segment spans residues methionine 1 to glycine 7. Residues isoleucine 8–alanine 28 traverse the membrane as a helical segment. Topologically, residues leucine 29–lysine 43 are cytoplasmic. A helical membrane pass occupies residues isoleucine 44 to leucine 64. The Extracellular segment spans residues glutamine 65–tyrosine 87. Asparagine 80 carries N-linked (GlcNAc...) asparagine glycosylation. The chain crosses the membrane as a helical span at residues isoleucine 88–phenylalanine 108. At leucine 109–arginine 125 the chain is on the cytoplasmic side. The chain crosses the membrane as a helical span at residues valine 126–proline 146. Residues glutamine 147 to asparagine 180 are Extracellular-facing. N-linked (GlcNAc...) asparagine glycans are attached at residues asparagine 161 and asparagine 175. The helical transmembrane segment at leucine 181–leucine 201 threads the bilayer. At tryptophan 202–serine 232 the chain is on the cytoplasmic side. A helical membrane pass occupies residues phenylalanine 233–leucine 253. The Extracellular portion of the chain corresponds to proline 254 to leucine 258. The chain crosses the membrane as a helical span at residues leucine 259–isoleucine 279. Residues leucine 280–lysine 308 are Cytoplasmic-facing.

The protein belongs to the G-protein coupled receptor T2R family.

The protein localises to the membrane. Functionally, putative taste receptor which may play a role in the perception of bitterness. The protein is Taste receptor type 2 member 107 of Mus musculus (Mouse).